Here is a 211-residue protein sequence, read N- to C-terminus: MIERTFVGENVSETLIDEYFKTKLVRAGYSHIDFKKTPIGTRITVFAEKPGFVIGRKGKMVKELTETLATEYSVKNPQIEVKQVENPDLDPAVVGHKIASSLERGMHFRKTAHSAIRRVMGSGAKGVAIIVSGKLSGERSRTEKFMDGYMKHCGEPAEALVNKSHQLAKLKLGIVGVTVKIMRPDVSLPDEIVISSGEIKEVSEISEVSQE.

The 70-residue stretch at 16-85 (IDEYFKTKLV…NPQIEVKQVE (70 aa)) folds into the KH type-2 domain.

Belongs to the universal ribosomal protein uS3 family. In terms of assembly, part of the 30S ribosomal subunit.

Binds the lower part of the 30S subunit head. This is Small ribosomal subunit protein uS3 from Methanococcus maripaludis (strain DSM 14266 / JCM 13030 / NBRC 101832 / S2 / LL).